The primary structure comprises 165 residues: Phosphopantetheine adenylyltransferase (165 aa).

Residue serine 10 coordinates substrate. Residues 10–11 and histidine 18 contribute to the ATP site; that span reads SF. The substrate site is built by lysine 42, threonine 79, and arginine 93. Residues 94–96, glutamate 104, and 129–135 contribute to the ATP site; these read GLR and VRPITAT.

This sequence belongs to the bacterial CoaD family. As to quaternary structure, homohexamer. Mg(2+) is required as a cofactor.

It localises to the cytoplasm. The enzyme catalyses (R)-4'-phosphopantetheine + ATP + H(+) = 3'-dephospho-CoA + diphosphate. It participates in cofactor biosynthesis; coenzyme A biosynthesis; CoA from (R)-pantothenate: step 4/5. Its function is as follows. Reversibly transfers an adenylyl group from ATP to 4'-phosphopantetheine, yielding dephospho-CoA (dPCoA) and pyrophosphate. In Afipia carboxidovorans (strain ATCC 49405 / DSM 1227 / KCTC 32145 / OM5) (Oligotropha carboxidovorans), this protein is Phosphopantetheine adenylyltransferase.